A 359-amino-acid polypeptide reads, in one-letter code: Nicotinate-nucleotide--dimethylbenzimidazole phosphoribosyltransferase (359 aa).

Glu-318 functions as the Proton acceptor in the catalytic mechanism.

Belongs to the CobT family. As to quaternary structure, homodimer.

It carries out the reaction 5,6-dimethylbenzimidazole + nicotinate beta-D-ribonucleotide = alpha-ribazole 5'-phosphate + nicotinate + H(+). It functions in the pathway nucleoside biosynthesis; alpha-ribazole biosynthesis; alpha-ribazole from 5,6-dimethylbenzimidazole: step 1/2. In terms of biological role, catalyzes the synthesis of alpha-ribazole-5'-phosphate from nicotinate mononucleotide (NAMN) and 5,6-dimethylbenzimidazole (DMB). This Escherichia coli O127:H6 (strain E2348/69 / EPEC) protein is Nicotinate-nucleotide--dimethylbenzimidazole phosphoribosyltransferase.